A 59-amino-acid polypeptide reads, in one-letter code: Conotoxin Cl14.4 (59 aa).

Positions 1 to 19 are cleaved as a signal peptide; the sequence is MKFLLFLSVALLLTSFIET. A propeptide spanning residues 20–36 is cleaved from the precursor; the sequence is VTVNKAGMERPSRALVG. Ile58 is subject to Isoleucine amide.

Post-translationally, contains 2 disulfide bonds. Expressed by the venom duct.

It is found in the secreted. This chain is Conotoxin Cl14.4, found in Californiconus californicus (California cone).